The primary structure comprises 94 residues: Integration host factor subunit beta (94 aa).

It belongs to the bacterial histone-like protein family. As to quaternary structure, heterodimer of an alpha and a beta chain.

This protein is one of the two subunits of integration host factor, a specific DNA-binding protein that functions in genetic recombination as well as in transcriptional and translational control. The protein is Integration host factor subunit beta of Ruegeria pomeroyi (strain ATCC 700808 / DSM 15171 / DSS-3) (Silicibacter pomeroyi).